The following is a 204-amino-acid chain: CDP-archaeol synthase (204 aa).

Helical transmembrane passes span 5-25 (VYACFLGLYFLVFSLIVYVIL), 43-63 (MLWVLPAYVANASPVVFSRLV), 91-111 (FEGFLGGMLSGVLVGILLAYA), 116-136 (GVSAFLLPLGALLGDLGGAFV), 147-167 (PAILLDQLDFVAGALILQGLF), and 175-195 (VVVAVVLLTPIVHLLTNMAAF).

This sequence belongs to the CDP-archaeol synthase family. Mg(2+) serves as cofactor.

It is found in the cell membrane. It catalyses the reaction 2,3-bis-O-(geranylgeranyl)-sn-glycerol 1-phosphate + CTP + H(+) = CDP-2,3-bis-O-(geranylgeranyl)-sn-glycerol + diphosphate. It functions in the pathway membrane lipid metabolism; glycerophospholipid metabolism. Catalyzes the formation of CDP-2,3-bis-(O-geranylgeranyl)-sn-glycerol (CDP-archaeol) from 2,3-bis-(O-geranylgeranyl)-sn-glycerol 1-phosphate (DGGGP) and CTP. This reaction is the third ether-bond-formation step in the biosynthesis of archaeal membrane lipids. The protein is CDP-archaeol synthase of Thermofilum pendens (strain DSM 2475 / Hrk 5).